The sequence spans 666 residues: ATP-dependent zinc metalloprotease FtsH (666 aa).

Positions 1-23 are disordered; the sequence is MSREVTSGLPQDKPTGSAPPPPP. Over 1-27 the chain is Cytoplasmic; it reads MSREVTSGLPQDKPTGSAPPPPPPWRR. A helical transmembrane segment spans residues 28–48; that stretch reads WLLPIGLLVSLVLLFTFPMRP. The Extracellular portion of the chain corresponds to 49 to 125; the sequence is SSGKTLTYSE…RPPGPSLASQ (77 aa). A helical membrane pass occupies residues 126–146; that stretch reads VLAGVLSFLPFLLLLGLFAYS. Residues 147-666 are Cytoplasmic-facing; that stretch reads GRRAGAGFLA…RTAASSDDLL (520 aa). 219-226 is a binding site for ATP; sequence GPPGTGKT. H442 contacts Zn(2+). Residue E443 is part of the active site. Residues H446 and D518 each coordinate Zn(2+). A disordered region spans residues 626 to 666; it reads PEEHREAAARHVRRPGIAAATGASMAGGSEPRTAASSDDLL. The span at 641-653 shows a compositional bias: low complexity; that stretch reads GIAAATGASMAGG.

This sequence in the central section; belongs to the AAA ATPase family. In the C-terminal section; belongs to the peptidase M41 family. Homohexamer. Zn(2+) serves as cofactor.

It localises to the cell membrane. Acts as a processive, ATP-dependent zinc metallopeptidase for both cytoplasmic and membrane proteins. Plays a role in the quality control of integral membrane proteins. The protein is ATP-dependent zinc metalloprotease FtsH of Acidothermus cellulolyticus (strain ATCC 43068 / DSM 8971 / 11B).